A 276-amino-acid chain; its full sequence is CASP-like protein 4A3 (276 aa).

Polar residues predominate over residues 1 to 13; the sequence is MPSMSPSSISTEK. A disordered region spans residues 1–76; the sequence is MPSMSPSSIS…PVKIEETPSP (76 aa). At 1–126 the chain is on the cytoplasmic side; sequence MPSMSPSSIS…RRSRREEIVK (126 aa). Residues 43-72 are compositionally biased toward basic and acidic residues; the sequence is SLDHSSDSEKEDEKRRPESRRNKNPVKIEE. Residues 127–147 traverse the membrane as a helical segment; it reads FVALGFRLSEVVLALISFSIM. Residues 148-167 are Extracellular-facing; the sequence is AADKTKGWSGDSFDRYKEYR. A helical transmembrane segment spans residues 168–188; the sequence is FCLSVNVVAFIYASFQACDLA. Residues 189 to 205 lie on the Cytoplasmic side of the membrane; that stretch reads YHLVKEKHLISHHLRPL. Residues 206 to 226 form a helical membrane-spanning segment; sequence FEFIIDQVLAYLLMCASTAAV. Residues 227-244 lie on the Extracellular side of the membrane; that stretch reads TRVDDWVSNWGKDDFTEM. Residues 245–265 form a helical membrane-spanning segment; that stretch reads ASASIAMSFLTFLAFAFSSLI. Topologically, residues 266–276 are cytoplasmic; the sequence is SGYNLFNQDSL.

This sequence belongs to the Casparian strip membrane proteins (CASP) family. In terms of assembly, homodimer and heterodimers.

It localises to the cell membrane. The polypeptide is CASP-like protein 4A3 (Arabidopsis lyrata subsp. lyrata (Lyre-leaved rock-cress)).